The sequence spans 622 residues: 1-deoxy-D-xylulose-5-phosphate synthase (622 aa).

Thiamine diphosphate contacts are provided by residues His80 and 121–123 (GHS). Asp152 is a binding site for Mg(2+). Thiamine diphosphate contacts are provided by residues 153–154 (GA), Asn181, Tyr288, and Glu370. Asn181 is a binding site for Mg(2+).

The protein belongs to the transketolase family. DXPS subfamily. As to quaternary structure, homodimer. Requires Mg(2+) as cofactor. Thiamine diphosphate is required as a cofactor.

The catalysed reaction is D-glyceraldehyde 3-phosphate + pyruvate + H(+) = 1-deoxy-D-xylulose 5-phosphate + CO2. It functions in the pathway metabolic intermediate biosynthesis; 1-deoxy-D-xylulose 5-phosphate biosynthesis; 1-deoxy-D-xylulose 5-phosphate from D-glyceraldehyde 3-phosphate and pyruvate: step 1/1. Its function is as follows. Catalyzes the acyloin condensation reaction between C atoms 2 and 3 of pyruvate and glyceraldehyde 3-phosphate to yield 1-deoxy-D-xylulose-5-phosphate (DXP). The polypeptide is 1-deoxy-D-xylulose-5-phosphate synthase (Shewanella sp. (strain MR-4)).